We begin with the raw amino-acid sequence, 402 residues long: Putative RNA-guided DNA endonuclease (402 aa).

Asp188 is a catalytic residue. The interval 202–239 (KITNPKHERRDRARLAKAQRDVSRKAKGSANRKKARRK) is disordered. Residues 204 to 225 (TNPKHERRDRARLAKAQRDVSR) show a composition bias toward basic and acidic residues. Basic residues predominate over residues 226-239 (KAKGSANRKKARRK). The active site involves Glu272. Positions 325, 328, 344, and 346 each coordinate Zn(2+). Asp353 is a catalytic residue. A disordered region spans residues 373–402 (GIRPQRESSRTGRSSVKQEPQRATAGIPRL).

It in the N-terminal section; belongs to the transposase 2 family. In the C-terminal section; belongs to the transposase 35 family.

In terms of biological role, an RNA-guided dsDNA endonuclease. When guided by an RNA derived from the right-end element of its insertion sequence element (IS), cleaves DNA downstream of the transposon-associated motif (TAM). Cleaves supercoiled and linear DNA in a staggered manner 15-21 bases from the TAM yielding 5'-overhangs. Binds reRNA, an approximately 150 nucleotide base sRNA derived from the 3' end of its own gene, the right end (RE) of the insertion sequence (IS) plus sequence downstream of the IS. The sequence is that of Putative RNA-guided DNA endonuclease from Streptomyces pristinaespiralis.